Consider the following 78-residue polypeptide: Large ribosomal subunit protein bL28 (78 aa).

It belongs to the bacterial ribosomal protein bL28 family.

This is Large ribosomal subunit protein bL28 from Alcanivorax borkumensis (strain ATCC 700651 / DSM 11573 / NCIMB 13689 / SK2).